Reading from the N-terminus, the 26-residue chain is Morintide mO4 (26 aa).

One can recognise a Chitin-binding type-1 domain in the interval 1–26 (NRLCCSQYGFCGTTSEYCSRVSGCQS). A disulfide bond links cysteine 4 and cysteine 18.

As to expression, seeds (at protein level).

In terms of biological role, chitin-binding protein which functions in defense against chitin-containing fungal pathogens. The sequence is that of Morintide mO4 from Moringa oleifera (Horseradish tree).